A 205-amino-acid polypeptide reads, in one-letter code: Small ribosomal subunit protein uS7 (205 aa).

The protein belongs to the universal ribosomal protein uS7 family. In terms of assembly, part of the 30S ribosomal subunit.

Functionally, one of the primary rRNA binding proteins, it binds directly to 16S rRNA where it nucleates assembly of the head domain of the 30S subunit. Is located at the subunit interface close to the decoding center. In Aeropyrum pernix (strain ATCC 700893 / DSM 11879 / JCM 9820 / NBRC 100138 / K1), this protein is Small ribosomal subunit protein uS7.